The sequence spans 486 residues: UDP-N-acetylmuramate--L-alanine ligase (486 aa).

129–135 (GTHGKTT) serves as a coordination point for ATP.

This sequence belongs to the MurCDEF family.

The protein resides in the cytoplasm. The enzyme catalyses UDP-N-acetyl-alpha-D-muramate + L-alanine + ATP = UDP-N-acetyl-alpha-D-muramoyl-L-alanine + ADP + phosphate + H(+). The protein operates within cell wall biogenesis; peptidoglycan biosynthesis. In terms of biological role, cell wall formation. The polypeptide is UDP-N-acetylmuramate--L-alanine ligase (Vibrio vulnificus (strain YJ016)).